A 392-amino-acid polypeptide reads, in one-letter code: UDP-N-acetylglucosamine--N-acetylmuramyl-(pentapeptide) pyrophosphoryl-undecaprenol N-acetylglucosamine transferase (392 aa).

UDP-N-acetyl-alpha-D-glucosamine-binding positions include 14 to 16 (TGG), Asn124, Arg167, Ser195, Ile251, and Gln296.

The protein belongs to the glycosyltransferase 28 family. MurG subfamily.

It localises to the cell inner membrane. It carries out the reaction di-trans,octa-cis-undecaprenyl diphospho-N-acetyl-alpha-D-muramoyl-L-alanyl-D-glutamyl-meso-2,6-diaminopimeloyl-D-alanyl-D-alanine + UDP-N-acetyl-alpha-D-glucosamine = di-trans,octa-cis-undecaprenyl diphospho-[N-acetyl-alpha-D-glucosaminyl-(1-&gt;4)]-N-acetyl-alpha-D-muramoyl-L-alanyl-D-glutamyl-meso-2,6-diaminopimeloyl-D-alanyl-D-alanine + UDP + H(+). Its pathway is cell wall biogenesis; peptidoglycan biosynthesis. Its function is as follows. Cell wall formation. Catalyzes the transfer of a GlcNAc subunit on undecaprenyl-pyrophosphoryl-MurNAc-pentapeptide (lipid intermediate I) to form undecaprenyl-pyrophosphoryl-MurNAc-(pentapeptide)GlcNAc (lipid intermediate II). The sequence is that of UDP-N-acetylglucosamine--N-acetylmuramyl-(pentapeptide) pyrophosphoryl-undecaprenol N-acetylglucosamine transferase from Sphingopyxis alaskensis (strain DSM 13593 / LMG 18877 / RB2256) (Sphingomonas alaskensis).